Consider the following 233-residue polypeptide: Large ribosomal subunit protein uL1 (233 aa).

It belongs to the universal ribosomal protein uL1 family. Part of the 50S ribosomal subunit.

Binds directly to 23S rRNA. The L1 stalk is quite mobile in the ribosome, and is involved in E site tRNA release. In terms of biological role, protein L1 is also a translational repressor protein, it controls the translation of the L11 operon by binding to its mRNA. The protein is Large ribosomal subunit protein uL1 of Hamiltonella defensa subsp. Acyrthosiphon pisum (strain 5AT).